The sequence spans 47 residues: Delta-actitoxin-Aspp1b (47 aa).

Intrachain disulfides connect cysteine 4-cysteine 44, cysteine 6-cysteine 34, and cysteine 27-cysteine 45.

Belongs to the sea anemone sodium channel inhibitory toxin family. Type I subfamily.

It localises to the secreted. Its subcellular location is the nematocyst. In terms of biological role, binds specifically to voltage-gated sodium channels (Nav), thereby delaying their inactivation during signal transduction. Has a longer mammalian heart stimulation effect than Hk2a, Hk8a and Hk16a. The protein is Delta-actitoxin-Aspp1b of Anthopleura sp. (strain 'Zhanjiang') (Sea anemone).